We begin with the raw amino-acid sequence, 653 residues long: Elongation factor 4 (653 aa).

Positions 1-30 are disordered; the sequence is MRTPCSQHRRDRPSAIGSQLPDADTLDTRQ. The 182-residue stretch at 50-231 folds into the tr-type G domain; the sequence is AQIRNFCIIA…EVVRQVPPPQ (182 aa). Residues 62-67 and 178-181 each bind GTP; these read DHGKST and NKID.

This sequence belongs to the TRAFAC class translation factor GTPase superfamily. Classic translation factor GTPase family. LepA subfamily.

Its subcellular location is the cell membrane. The catalysed reaction is GTP + H2O = GDP + phosphate + H(+). Required for accurate and efficient protein synthesis under certain stress conditions. May act as a fidelity factor of the translation reaction, by catalyzing a one-codon backward translocation of tRNAs on improperly translocated ribosomes. Back-translocation proceeds from a post-translocation (POST) complex to a pre-translocation (PRE) complex, thus giving elongation factor G a second chance to translocate the tRNAs correctly. Binds to ribosomes in a GTP-dependent manner. In Mycobacterium bovis (strain ATCC BAA-935 / AF2122/97), this protein is Elongation factor 4.